A 124-amino-acid chain; its full sequence is Small ribosomal subunit protein uS12 (124 aa).

Asp-89 bears the 3-methylthioaspartic acid mark.

This sequence belongs to the universal ribosomal protein uS12 family. In terms of assembly, part of the 30S ribosomal subunit. Contacts proteins S8 and S17. May interact with IF1 in the 30S initiation complex.

With S4 and S5 plays an important role in translational accuracy. Functionally, interacts with and stabilizes bases of the 16S rRNA that are involved in tRNA selection in the A site and with the mRNA backbone. Located at the interface of the 30S and 50S subunits, it traverses the body of the 30S subunit contacting proteins on the other side and probably holding the rRNA structure together. The combined cluster of proteins S8, S12 and S17 appears to hold together the shoulder and platform of the 30S subunit. The chain is Small ribosomal subunit protein uS12 from Acinetobacter baumannii (strain AB307-0294).